A 320-amino-acid chain; its full sequence is Major pollen allergen Pha a 5.1 (320 aa).

The first 23 residues, 1-23 (MAVQKYTMALFLAVALVAGPAAP), serve as a signal peptide directing secretion. A disordered region spans residues 21 to 45 (AAPTPPTPRTPPLLPPPRARDKATL). The segment covering 22-37 (APTPPTPRTPPLLPPP) has biased composition (pro residues).

This sequence belongs to the Poa p IX/Phl p VI allergen family.

The sequence is that of Major pollen allergen Pha a 5.1 from Phalaris aquatica (Canary grass).